The sequence spans 295 residues: Elongation factor Ts (295 aa).

The segment at 79–82 (TDFV) is involved in Mg(2+) ion dislocation from EF-Tu.

The protein belongs to the EF-Ts family.

It localises to the cytoplasm. Its function is as follows. Associates with the EF-Tu.GDP complex and induces the exchange of GDP to GTP. It remains bound to the aminoacyl-tRNA.EF-Tu.GTP complex up to the GTP hydrolysis stage on the ribosome. This Bacillus anthracis (strain A0248) protein is Elongation factor Ts.